A 241-amino-acid chain; its full sequence is Attacin-C (241 aa).

Positions 1–21 are cleaved as a signal peptide; that stretch reads MSKIVLLIVVIVGVLGSLAVA. Residues 22–23 constitute a propeptide that is removed on maturation; it reads LP. Position 24 is a pyrrolidone carboxylic acid (Gln-24). Thr-39 is a glycosylation site (O-linked (GalNAc...) threonine). The residue at position 127 (Ser-127) is a Phosphoserine.

This sequence belongs to the attacin/sarcotoxin-2 family. In terms of tissue distribution, hemolymph (at protein level).

It is found in the secreted. In terms of biological role, has antimicrobial activity in synergy with other peptides. Strongest activity observed against E.cloacae. The polypeptide is Attacin-C (Drosophila melanogaster (Fruit fly)).